Consider the following 351-residue polypeptide: tRNA N6-adenosine threonylcarbamoyltransferase (351 aa).

Fe cation is bound by residues His-111 and His-115. Residues 134–138 (LVSGG), Asp-167, Gly-180, and Asn-276 each bind substrate. Residue Asp-304 coordinates Fe cation.

It belongs to the KAE1 / TsaD family. Fe(2+) serves as cofactor.

Its subcellular location is the cytoplasm. The enzyme catalyses L-threonylcarbamoyladenylate + adenosine(37) in tRNA = N(6)-L-threonylcarbamoyladenosine(37) in tRNA + AMP + H(+). Its function is as follows. Required for the formation of a threonylcarbamoyl group on adenosine at position 37 (t(6)A37) in tRNAs that read codons beginning with adenine. Is involved in the transfer of the threonylcarbamoyl moiety of threonylcarbamoyl-AMP (TC-AMP) to the N6 group of A37, together with TsaE and TsaB. TsaD likely plays a direct catalytic role in this reaction. This is tRNA N6-adenosine threonylcarbamoyltransferase from Marinobacter nauticus (strain ATCC 700491 / DSM 11845 / VT8) (Marinobacter aquaeolei).